The primary structure comprises 275 residues: NH(3)-dependent NAD(+) synthetase (275 aa).

46-53 lines the ATP pocket; it reads GISGGQDS. Asp-52 serves as a coordination point for Mg(2+). Arg-140 contributes to the deamido-NAD(+) binding site. Thr-160 serves as a coordination point for ATP. Glu-165 is a Mg(2+) binding site. Lys-173 and Asp-180 together coordinate deamido-NAD(+). Positions 189 and 211 each coordinate ATP. 260-261 contacts deamido-NAD(+); the sequence is HK.

This sequence belongs to the NAD synthetase family. In terms of assembly, homodimer.

The enzyme catalyses deamido-NAD(+) + NH4(+) + ATP = AMP + diphosphate + NAD(+) + H(+). It functions in the pathway cofactor biosynthesis; NAD(+) biosynthesis; NAD(+) from deamido-NAD(+) (ammonia route): step 1/1. Functionally, catalyzes the ATP-dependent amidation of deamido-NAD to form NAD. Uses ammonia as a nitrogen source. This chain is NH(3)-dependent NAD(+) synthetase, found in Escherichia coli O45:K1 (strain S88 / ExPEC).